The following is a 239-amino-acid chain: Fatty acid metabolism regulator protein (239 aa).

One can recognise an HTH gntR-type domain in the interval Q6–F74. The segment at residues E34 to Q53 is a DNA-binding region (H-T-H motif).

Homodimer.

It is found in the cytoplasm. Multifunctional regulator of fatty acid metabolism. This is Fatty acid metabolism regulator protein from Shigella flexneri.